Here is a 612-residue protein sequence, read N- to C-terminus: MADVALRITETVARLQKELKCGICCSTYKDPILSTCFHIFCRSCINACFERKRKVQCPICRSVLDKRSCRDTYQITMAVQNYLKLSEAFKKDIENMNTFKSLPPEKMFMESQMPLDITIIPENDGKRCAPDFAIPFLPVRRKRPSRPQPPSAFAEEPAEPVEPPEPATKQPVELQSRVFPLEKLKKDVETSTETYKISREELKNVDIEEYINTLRENSTEIDEIDALFQLMPTMRQFLRNNINQLMEKFHVAPPKKSEKPANRRVSFASSQDLENIKIMTASESLETPPEPIQKLAQKPEVFKSTQNLIDLNLNTAVKKPVVVASDDDEVVEDSEGELQIDEDDLANVTCATSSTTLDADRTPKAIQDDEDRIDDELSQVPKTIVCSRIHNDADEVVGLELLSDFYHKFLSNACRFAEDVNEHTTHLVMMNSEGRSISQKSTAYLYAIARKCVIVGRQWLVDCITTGLLLSEADYTITSCSSTIPVKIPPSIGSEMGWLRSRNDEHGKLFAGRRFMILRKFTMNPYFDYKQLIELVQQCGGEILSCYENLSPEKLYIIFSKHSKAIEESKNIENLYKCDVVTMEWVLDSISEYLILPTQPYKAVDSIGCLQD.

The RING-type zinc finger occupies 21–61 (CGICCSTYKDPILSTCFHIFCRSCINACFERKRKVQCPICR). Positions 140 to 173 (RRKRPSRPQPPSAFAEEPAEPVEPPEPATKQPVE) are disordered. 2 consecutive BRCT domains span residues 415–477 (RFAE…DYTI) and 505–603 (EHGK…PYKA).

In terms of assembly, heterodimer (via RING-type zinc finger) with brd-1 to form the core CeBCD complex. Brc-1-brd-1 heterodimer-containing CeBCD complexes bound to chromatin are activated as an E3-ubiquitin ligase in response to DNA damage. The heterodimer interacts with the recombinase rad-51 following ionizing irradiation; the interaction is direct. The heterodimer interacts the E2-ubiquitin-conjugating enzyme let-70 following ionizing irradiation. The heterodimer interacts with the pro-crossover proteins msh-5 and syp-3. Post-translationally, phosphorylation of CeBCD complexes is required for E3 ubiquitin-protein ligase activity.

It localises to the nucleus. Its subcellular location is the chromosome. The protein resides in the cytoplasm. It catalyses the reaction S-ubiquitinyl-[E2 ubiquitin-conjugating enzyme]-L-cysteine + [acceptor protein]-L-lysine = [E2 ubiquitin-conjugating enzyme]-L-cysteine + N(6)-ubiquitinyl-[acceptor protein]-L-lysine.. It functions in the pathway protein modification; protein ubiquitination. E3 ubiquitin-protein ligase activity of CeBCD complexes occurs at DNA damage sites. Following DNA damage, E3 ubiquitin-protein ligase activity is reduced by caffeine treatment (inhibitor of ATM and ATK kinase activity). Its function is as follows. E3 ubiquitin-protein ligase that specifically mediates the formation of polyubiquitin chains and plays a central role in DNA repair. Plays a role in triggering cellular responses at damage sites in response to DNA damage that may be induced by UV and ionizing radiation for example. Functions in double-strand break repair, and is required for homologous recombination between sister chromatids in meiotic and mitotic cells. In particular, protects against chromosome non-disjunction and nuclear fragmentation during meiotic double-strand break repair to ensure sister chromatid recombination and aid chromosome stability. Required for normal cell cycle progression. Along with brap-2 modulates the expression of cell cycle arrest protein cki-1 in response to increased levels of reactive oxygen species. Constituent of the CeBCD complex that possesses E3 ubiquitin-protein ligase activity. When bound to chromatin, the brc-1-brd-1 heterodimer within the CeBCD complex is inactive during normal conditions, but in response to DNA damage, the brc-1-brd-1 heterodimer associates with other proteins such as the recombinase rad-51 or the E2-ubiquitin-conjugating enzyme let-70, which activate the CeBCD complex as an E3-ubiquitin ligase. Moreover, association between the brc-1-brd-1 heterodimer and rad-51 and let-70, probably requires DNA checkpoint proteins such as atl-1 and mre-11 in order to induce ubiquitination at DNA damage sites. To this end, the brc-1-brd-1 heterodimer coordinates a diverse range of cellular pathways such as DNA damage repair, ubiquitination and transcriptional regulation to maintain genomic stability. The polypeptide is Breast cancer type 1 susceptibility protein homolog (Caenorhabditis elegans).